A 380-amino-acid chain; its full sequence is MAPNPRKSHPLLKMINNSLIDLPTPSNISIWWNFGSLLGICLLTQIMTGLLLATHYTADTTLAFSSVAHTCRNVQYGWLIRNLHANGASFFFICIYLHIGRGLYYGSYLYKETWNTGIILLLTLMATAFVGYVLPWGQMSFWGATVITNLFSAIPYIGQTIVEWAWGGFSVDNPTLTRFFALHFLLPFLIAGLTLIHLTFLHESGSNNPLGIISNCDKIPFHPYFSLKDILGFMLMLLPLTTLALFSPNLLGDPENFTPANPLTTPPHIKPEWYFLFAYAILRSIPNKLGGVLALAASVLILFLIPFLHKSKQRTMTFRPISQLLFWTLVANLLILTWIGSQPVEHPFIIIGQLASLTYFLILLALFPLTGALENKLLNH.

The next 4 helical transmembrane spans lie at 34–54 (FGSL…LLAT), 78–99 (WLIR…YLHI), 114–134 (WNTG…GYVL), and 179–199 (FFAL…IHLT). The heme b site is built by histidine 84 and histidine 98. Heme b-binding residues include histidine 183 and histidine 197. An a ubiquinone-binding site is contributed by histidine 202. 4 helical membrane passes run 227–247 (LKDI…ALFS), 289–309 (LGGV…PFLH), 321–341 (ISQL…WIGS), and 348–368 (FIII…ALFP).

It belongs to the cytochrome b family. In terms of assembly, the cytochrome bc1 complex contains 11 subunits: 3 respiratory subunits (MT-CYB, CYC1 and UQCRFS1), 2 core proteins (UQCRC1 and UQCRC2) and 6 low-molecular weight proteins (UQCRH/QCR6, UQCRB/QCR7, UQCRQ/QCR8, UQCR10/QCR9, UQCR11/QCR10 and a cleavage product of UQCRFS1). This cytochrome bc1 complex then forms a dimer. The cofactor is heme b.

The protein localises to the mitochondrion inner membrane. In terms of biological role, component of the ubiquinol-cytochrome c reductase complex (complex III or cytochrome b-c1 complex) that is part of the mitochondrial respiratory chain. The b-c1 complex mediates electron transfer from ubiquinol to cytochrome c. Contributes to the generation of a proton gradient across the mitochondrial membrane that is then used for ATP synthesis. The polypeptide is Cytochrome b (MT-CYB) (Buteo buteo (Eurasian buzzard)).